We begin with the raw amino-acid sequence, 492 residues long: ATP synthase subunit beta, chloroplastic (492 aa).

170-177 (GGAGVGKT) is a binding site for ATP.

The protein belongs to the ATPase alpha/beta chains family. In terms of assembly, F-type ATPases have 2 components, CF(1) - the catalytic core - and CF(0) - the membrane proton channel. CF(1) has five subunits: alpha(3), beta(3), gamma(1), delta(1), epsilon(1). CF(0) has four main subunits: a(1), b(1), b'(1) and c(9-12).

It is found in the plastid. The protein localises to the chloroplast thylakoid membrane. It carries out the reaction ATP + H2O + 4 H(+)(in) = ADP + phosphate + 5 H(+)(out). In terms of biological role, produces ATP from ADP in the presence of a proton gradient across the membrane. The catalytic sites are hosted primarily by the beta subunits. The chain is ATP synthase subunit beta, chloroplastic from Anthoceros angustus (Hornwort).